The sequence spans 609 residues: Mitochondrial nucleoid-associated protein 1 (609 aa).

Over 1 to 554 (MSDNPPRMEV…CNTTIRKSGF (554 aa)) the chain is Extracellular. Disordered stretches follow at residues 133-163 (QEET…GESR) and 406-425 (SPEG…QASH). Positions 146–161 (TSPKRELAEDLPKSGE) are enriched in basic and acidic residues. The helical transmembrane segment at 555 to 571 (GGITMLSTGYFVLCCSW) threads the bilayer. Residues 572-609 (SFRRLKKLCRPLPWKSTVPPSVGVAKTTGDCRSKTCLD) lie on the Cytoplasmic side of the membrane.

It is found in the mitochondrion inner membrane. The protein localises to the mitochondrion matrix. The protein resides in the mitochondrion nucleoid. Critical regulator of mitochondrial DNA (mtDNA) abundance. Binds dsDNA throughout the mitochondrial genome without sequence specificity and controls mtDNA copy number by promoting its replication. Also plays important roles in mitochondrial metabolism and cell proliferation. This chain is Mitochondrial nucleoid-associated protein 1, found in Pongo abelii (Sumatran orangutan).